A 2467-amino-acid chain; its full sequence is Polyprotein P1234 (2467 aa).

The Alphavirus-like MT domain maps to 28–257 (EARQVTDNDH…EDRSLLRSWH (230 aa)). The segment at 242-261 (GSTIYTEDRSLLRSWHLPNV) is nsP1 membrane-binding. Cysteine 417 is lipidated: S-palmitoyl cysteine; by host. The (+)RNA virus helicase ATP-binding domain maps to 688-839 (DLVDPPFHEF…HDICTEVYHK (152 aa)). 719–726 (GVPGSGKS) provides a ligand contact to a ribonucleoside 5'-triphosphate. Residues 840-988 (SISRRCTQTV…LDDWQREHDA (149 aa)) form the (+)RNA virus helicase C-terminal domain. In terms of domain architecture, Peptidase C9 spans 1001 to 1320 (DVFQNKVNVC…VVLDNIYQGS (320 aa)). The nucleolus localization signal stretch occupies residues 1002 to 1021 (VFQNKVNVCWAKALEPVLAT). Cysteine 1010 serves as the catalytic For cysteine protease nsP2 activity. The Nuclear export signal signature appears at 1054–1063 (TRFFGVDLDS). Catalysis depends on histidine 1079, which acts as the For cysteine protease nsP2 activity. Positions 1177-1181 (PGKKV) match the Nuclear localization signal motif. A Macro domain is found at 1328–1486 (APAYRVIRGD…RIIEAIHRKE (159 aa)). Positions 1337, 1351, 1359, 1438, 1439, and 1440 each coordinate ADP-D-ribose. Zn(2+)-binding residues include cysteine 1588, cysteine 1590, cysteine 1613, and cysteine 1631. Positions 1798 to 1833 (RPVPAPRRRPIPSPRSTASAPPVPKPRRTKYQQPPG) are disordered. Residues 1831 to 1847 (PPGVARAISEAELDEYI) form a binding to host FXR family members region. In terms of domain architecture, RdRp catalytic spans 2224 to 2339 (DPVLETDIAS…HGVVSDTLMA (116 aa)).

In terms of assembly, interacts with non-structural protein 3. Interacts with RNA-directed RNA polymerase nsP4. Interacts with protease nsP2. interacts with itself. Interacts with mRNA-capping enzyme nsP1. Interacts with host DDX1. Interacts with host DDX3. Interacts (via C-terminus) with host FXR1; this interaction inhibits the formation of host stress granules on viral mRNAs and the nsp3-FXR1 complexes bind viral RNAs and probably orchestrate the assembly of viral replication complexes. Interacts (via C-terminus) with host FXR2; this interaction inhibits the formation of host stress granules on viral mRNAs and the nsp3-FXR2 complexes bind viral RNAs and probably orchestrate the assembly of viral replication complexes. Interacts (via C-terminus) with host FMR1; this interaction inhibits the formation of host stress granules on viral mRNAs and the nsp3-FMR1 complexes bind viral RNAs and probably orchestrate the assembly of viral replication complexes. As to quaternary structure, interacts with mRNA-capping enzyme nsP1. Interacts with protease nsP2. interacts with itself. In terms of assembly, interacts with RNA-directed RNA polymerase nsP4. Interacts with mRNA-capping enzyme nsP1. Interacts with KPNA1/karyopherin-alpha1; this interaction probably allows the active transport of protease nsP2 into the host nucleus. Mg(2+) serves as cofactor. The cofactor is Mn(2+). In terms of processing, specific enzymatic cleavages in vivo yield mature proteins. The processing of the polyprotein is temporally regulated. In early stages (1.7 hpi), P1234 is first cleaved in trans through its nsP2 protease activity, releasing P123' and nsP4, which associate to form the early replication complex. At the same time, P1234 is also cut at the nsP1/nsP2 site early in infection but with lower efficiency. After replication of the viral minus-strand RNAs (4 hpi), the polyproteins are cut at the nsP1/nsP2 and nsP2/nsP3 sites very efficiently, preventing accumulation of P123' and P1234 and allowing the formation of the late replication complex. NsP3'/nsP4 site is not cleaved anymore and P34 is produced rather than nsP4. Specific enzymatic cleavages in vivo yield mature proteins. The processing of the polyprotein is temporally regulated. In early stages (1.7 hpi), P123 is cleaved at the nsP1/nsP2 site with low efficiency. After replication of the viral minus-strand RNAs (4 hpi), the polyproteins are cut at the nsP1/nsP2 and nsP2/nsP3 sites very efficiently, preventing accumulation of P123 and allowing the formation of the late replication complex. Post-translationally, specific enzymatic cleavages in vivo yield mature proteins. The processing of the polyprotein is temporally regulated. In early stages (1.7 hpi), P123' is cleaved at the nsP1/nsP2 site with low efficiency. After replication of the viral minus-strand RNAs (4 hpi), the polyproteins are cut at the nsP1/nsP2 and nsP2/nsP3 sites very efficiently, preventing accumulation of P123' and allowing the formation of the late replication complex. In terms of processing, palmitoylated by host palmitoyltransferases ZDHHC2 and ZDHHC19. Phosphorylated by host on serines and threonines. Post-translationally, ubiquitinated; targets the protein for rapid degradation via the ubiquitin system. Nsp4 is present in extremely low quantities due to low frequency of translation through the amber stop-codon and the degradation by the ubiquitin pathway.

It is found in the host cytoplasmic vesicle membrane. It localises to the host cell membrane. The protein resides in the host cell projection. Its subcellular location is the host filopodium. The protein localises to the host nucleus. It is found in the host cytoplasm. It catalyses the reaction GTP + S-adenosyl-L-methionine = N(7)-methyl-GTP + S-adenosyl-L-homocysteine. It carries out the reaction N(7)-methyl-GTP + L-histidyl-[protein] = N(tele)-(N(7)-methylguanosine 5'-phospho)-L-histidyl-[protein] + diphosphate. The enzyme catalyses N(tele)-(N(7)-methylguanosine 5'-phospho)-L-histidyl-[protein] + a 5'-end diphospho-(purine-ribonucleoside) in mRNA + H(+) = a 5'-end (N(7)-methyl 5'-triphosphoguanosine)-(purine-ribonucleoside) in mRNA + L-histidyl-[protein]. The catalysed reaction is a 5'-end triphospho-ribonucleoside in mRNA + H2O = a 5'-end diphospho-ribonucleoside in mRNA + phosphate + H(+). It catalyses the reaction a ribonucleoside 5'-triphosphate + H2O = a ribonucleoside 5'-diphosphate + phosphate + H(+). It carries out the reaction ATP + H2O = ADP + phosphate + H(+). The enzyme catalyses RNA(n) + a ribonucleoside 5'-triphosphate = RNA(n+1) + diphosphate. The catalysed reaction is 4-O-(ADP-D-ribosyl)-L-aspartyl-[protein] + H2O = L-aspartyl-[protein] + ADP-D-ribose + H(+). It catalyses the reaction 5-O-(ADP-D-ribosyl)-L-glutamyl-[protein] + H2O = L-glutamyl-[protein] + ADP-D-ribose + H(+). It carries out the reaction RNA(n) + ATP = RNA(n)-3'-adenine ribonucleotide + diphosphate. The enzyme catalyses ADP-alpha-D-ribose 1''-phosphate + H2O = ADP-D-ribose + phosphate. Inhibited by sinefungin. Functionally, inactive precursor of the viral replicase, which is activated by cleavages carried out by the viral protease nsP2. Its function is as follows. The early replication complex formed by the polyprotein P123 and nsP4 synthesizes the minus-strand RNAs (antigenome). Polyprotein P123 is a short-lived polyprotein that accumulates during early stage of infection. As soon P123 is cleaved into mature proteins, the plus-strand RNAs synthesis begins. The early replication complex formed by the polyprotein P123' and nsP4 synthesizes minus-strand RNAs (antigenome). Polyprotein P123' is a short-lived polyprotein that accumulates during early stage of infection. As soon P123' is cleaved into mature proteins, the plus-strand RNAs synthesis begins. In terms of biological role, cytoplasmic capping enzyme that catalyzes two virus-specific reactions: methyltransferase and nsP1 guanylyltransferase. mRNA-capping is necessary since all viral RNAs are synthesized in the cytoplasm, and host capping enzymes are restricted to the nucleus. The enzymatic reaction involves a covalent link between 7-methyl-GMP and nsP1, whereas eukaryotic capping enzymes form a covalent complex only with GMP. NsP1 capping consists in the following reactions: GTP is first methylated into 7-methyl-GMP and then is covalently linked to nsP1 to form the m7GMp-nsP1 complex from which 7-methyl-GMP complex is transferred to the mRNA to create the cap structure. NsP1 is also needed for the initiation of the minus-strand RNAs synthesis. Probably serves as a membrane anchor for the replication complex composed of nsP1-nsP4. Nsp1 is needed for the initiation of the minus-strand RNAs synthesis. Palmitoylated nsP1 is remodeling host cell cytoskeleton, and induces filopodium-like structure formation at the surface of the host cell. Functionally, multifunctional protein whose N-terminus is part of the RNA polymerase complex and displays NTPase, RNA triphosphatase and helicase activities. NTPase and RNA triphosphatase are involved in viral RNA capping and helicase keeps a check on the dsRNA replication intermediates. The C-terminus harbors a protease that specifically cleaves the polyproteins and releases the mature proteins. Required for the shutoff of minus-strand RNAs synthesis. Inhibits host translation to ensure maximal viral gene expression and evade host immune response. Its function is as follows. Seems to be essential for minus-strand RNAs and subgenomic 26S mRNAs synthesis. Displays mono-ADP-ribosylhydrolase activity. ADP-ribosylation is a post-translational modification that controls various processes of the host cell and the virus probably needs to revert it for optimal viral replication. Binds proteins of FXR and G3BP families and sequesters them into the viral RNA replication complexes thereby inhibiting the formation of host stress granules on viral mRNAs. The nsp3-FXR and nsp3-G3BP complexes bind viral RNAs and probably orchestrate the assembly of viral replication complexes, thanks to the ability of G3BP and FXR family members to self-assemble and bind DNA. Seems to be essential for minus-strand RNAs and subgenomic 26S mRNAs synthesis. Displays mono-ADP-ribosylhydrolase activity. ADP-ribosylation is a post-translational modification that controls various processes of the host cell and the virus probably needs to revert it for optimal viral replication. Binds proteins of FXR and G3BP families and sequesters them into the viral RNA replication complexes thereby inhibiting the formation of host stress granules on viral mRNAs. The nsp3'-FXR and nsp3-G3BP complexes bind viral RNAs and probably orchestrate the assembly of viral replication complexes, thanks to the ability of G3BP and FXR family members to self-assemble and bind DNA. In terms of biological role, RNA dependent RNA polymerase. Replicates genomic and antigenomic RNA by recognizing replications specific signals. The early replication complex formed by the polyprotein P123 and nsP4 synthesizes minus-strand RNAs. The late replication complex composed of fully processed nsP1-nsP4 is responsible for the production of genomic and subgenomic plus-strand RNAs. The protein is Polyprotein P1234 of Western equine encephalitis virus (WEEV).